The following is a 148-amino-acid chain: Large ribosomal subunit protein bL9 (148 aa).

Belongs to the bacterial ribosomal protein bL9 family.

Functionally, binds to the 23S rRNA. This Ectopseudomonas mendocina (strain ymp) (Pseudomonas mendocina) protein is Large ribosomal subunit protein bL9.